Consider the following 272-residue polypeptide: GTP cyclohydrolase FolE2 (272 aa).

The protein belongs to the GTP cyclohydrolase IV family.

It catalyses the reaction GTP + H2O = 7,8-dihydroneopterin 3'-triphosphate + formate + H(+). The protein operates within cofactor biosynthesis; 7,8-dihydroneopterin triphosphate biosynthesis; 7,8-dihydroneopterin triphosphate from GTP: step 1/1. Its function is as follows. Converts GTP to 7,8-dihydroneopterin triphosphate. The chain is GTP cyclohydrolase FolE2 from Polynucleobacter asymbioticus (strain DSM 18221 / CIP 109841 / QLW-P1DMWA-1) (Polynucleobacter necessarius subsp. asymbioticus).